Here is a 384-residue protein sequence, read N- to C-terminus: Endoglucanase (384 aa).

Positions 1 to 25 (MTRRRLLHAGTLAGVAALLPAAALA) are cleaved as a signal peptide. E63 serves as the catalytic Proton donor. The active-site Nucleophile is the D124.

It belongs to the glycosyl hydrolase 8 (cellulase D) family.

Its subcellular location is the secreted. It catalyses the reaction Endohydrolysis of (1-&gt;4)-beta-D-glucosidic linkages in cellulose, lichenin and cereal beta-D-glucans.. Its pathway is glycan metabolism; bacterial cellulose biosynthesis. Functionally, hydrolyzes carboxymethylcellulose. In Xanthomonas axonopodis pv. citri (strain 306), this protein is Endoglucanase (bcsZ).